Here is a 117-residue protein sequence, read N- to C-terminus: Large ribosomal subunit protein bL19 (117 aa).

It belongs to the bacterial ribosomal protein bL19 family.

In terms of biological role, this protein is located at the 30S-50S ribosomal subunit interface and may play a role in the structure and function of the aminoacyl-tRNA binding site. In Desulfosudis oleivorans (strain DSM 6200 / JCM 39069 / Hxd3) (Desulfococcus oleovorans), this protein is Large ribosomal subunit protein bL19.